Consider the following 27-residue polypeptide: Delta-conotoxin TsVIA (27 aa).

3 cysteine pairs are disulfide-bonded: cysteine 1–cysteine 17, cysteine 8–cysteine 21, and cysteine 16–cysteine 25.

Belongs to the conotoxin O1 superfamily. As to expression, expressed by the venom duct.

It localises to the secreted. In terms of biological role, delta-conotoxins bind to site 6 of voltage-gated sodium channels (Nav) and inhibit the inactivation process. This toxin inhibits tetrodotoxin(TTX)-sensitive sodium channels. A test on mouse Nav1.6/SCN8A confirms this sensitivity. This Conus tessulatus (Tessellate cone) protein is Delta-conotoxin TsVIA.